The chain runs to 155 residues: MAKGEGHILAQNKKARHDYHIVETVEAGIVLTGTEIKSVRAARIQLKDGFAQIKNGEAWLVNVHIAPFEQGNIWNADPERTRKLLLKKREITHLANELKGSGMTLAPLKVYLKDGFAKVLIGLAKGKHEYDKRETIKRRDQERDIKKQMKHYNAR.

Residues 135–147 (TIKRRDQERDIKK) are compositionally biased toward basic and acidic residues. A disordered region spans residues 135–155 (TIKRRDQERDIKKQMKHYNAR).

Belongs to the SmpB family.

It localises to the cytoplasm. Its function is as follows. Required for rescue of stalled ribosomes mediated by trans-translation. Binds to transfer-messenger RNA (tmRNA), required for stable association of tmRNA with ribosomes. tmRNA and SmpB together mimic tRNA shape, replacing the anticodon stem-loop with SmpB. tmRNA is encoded by the ssrA gene; the 2 termini fold to resemble tRNA(Ala) and it encodes a 'tag peptide', a short internal open reading frame. During trans-translation Ala-aminoacylated tmRNA acts like a tRNA, entering the A-site of stalled ribosomes, displacing the stalled mRNA. The ribosome then switches to translate the ORF on the tmRNA; the nascent peptide is terminated with the 'tag peptide' encoded by the tmRNA and targeted for degradation. The ribosome is freed to recommence translation, which seems to be the essential function of trans-translation. The chain is SsrA-binding protein from Streptococcus pyogenes serotype M12 (strain MGAS2096).